A 60-amino-acid polypeptide reads, in one-letter code: UPF0434 protein YPA_0693 (60 aa).

It belongs to the UPF0434 family.

This is UPF0434 protein YPA_0693 from Yersinia pestis bv. Antiqua (strain Antiqua).